Here is a 540-residue protein sequence, read N- to C-terminus: Chaperonin GroEL 3 (540 aa).

ATP-binding positions include 30–33 (TLGP), K51, 87–91 (DGTTT), G415, 479–481 (NAA), and D495.

This sequence belongs to the chaperonin (HSP60) family. As to quaternary structure, forms a cylinder of 14 subunits composed of two heptameric rings stacked back-to-back. Interacts with the co-chaperonin GroES.

Its subcellular location is the cytoplasm. The catalysed reaction is ATP + H2O + a folded polypeptide = ADP + phosphate + an unfolded polypeptide.. Together with its co-chaperonin GroES, plays an essential role in assisting protein folding. The GroEL-GroES system forms a nano-cage that allows encapsulation of the non-native substrate proteins and provides a physical environment optimized to promote and accelerate protein folding. The sequence is that of Chaperonin GroEL 3 from Burkholderia ambifaria (strain ATCC BAA-244 / DSM 16087 / CCUG 44356 / LMG 19182 / AMMD) (Burkholderia cepacia (strain AMMD)).